The sequence spans 350 residues: Arginine N-succinyltransferase (350 aa).

Leu-125 is a succinyl-CoA binding site. Catalysis depends on His-229, which acts as the Proton donor.

The protein belongs to the arginine N-succinyltransferase family.

It catalyses the reaction succinyl-CoA + L-arginine = N(2)-succinyl-L-arginine + CoA + H(+). Its pathway is amino-acid degradation; L-arginine degradation via AST pathway; L-glutamate and succinate from L-arginine: step 1/5. Functionally, catalyzes the transfer of succinyl-CoA to arginine to produce N(2)-succinylarginine. This chain is Arginine N-succinyltransferase, found in Yersinia pseudotuberculosis serotype IB (strain PB1/+).